The sequence spans 247 residues: MGPPLWPDLQEPPPPGTSSQIRSPLLCDVIKPAPHHDVTVRVVPPPRFLPLLLRPLPSDGDIAMRRDRGPKPALGGAGEVEPGGMAASPTGRPRRLQRYLQSGEFDQFRDFPIFESNFVQFCPDIYPAPTSDLWPQVTRLGEVANEVTMGVAASSPALELPDLLLLAGPAKENGHLQLFGLFPLKFVQLFVHDKSRCQLEVKLNTSRTFYLQLRAPLKTRDREFGQWVRLLYRLRFLSASAVPFTQE.

Over residues 1–16 the composition is skewed to pro residues; the sequence is MGPPLWPDLQEPPPPG. 2 disordered regions span residues 1–22 and 60–92; these read MGPPLWPDLQEPPPPGTSSQIR and GDIAMRRDRGPKPALGGAGEVEPGGMAASPTGR.

Belongs to the GARIN family. Interacts (via N-terminus) with RAB2B (in GTP-bound form).

The protein resides in the golgi apparatus. Its function is as follows. RAB2B effector protein which promotes cytosolic DNA-induced innate immune responses. Regulates IFN responses against DNA viruses by regulating the CGAS-STING signaling axis. The chain is Golgi-associated RAB2 interactor protein 5A from Homo sapiens (Human).